We begin with the raw amino-acid sequence, 454 residues long: tRNA-2-methylthio-N(6)-dimethylallyladenosine synthase (454 aa).

The region spanning 6-122 is the MTTase N-terminal domain; sequence RRYHITTYGC…LQDLLEQVAS (117 aa). Positions 15, 51, 85, 157, 161, and 164 each coordinate [4Fe-4S] cluster. In terms of domain architecture, Radical SAM core spans 143–384; sequence RDSAVTAWVN…GVCAELRSQR (242 aa). The TRAM domain occupies 383 to 447; the sequence is QRYANRIEEV…SFSLTGEPLS (65 aa).

This sequence belongs to the methylthiotransferase family. MiaB subfamily. As to quaternary structure, monomer. The cofactor is [4Fe-4S] cluster.

The protein resides in the cytoplasm. It carries out the reaction N(6)-dimethylallyladenosine(37) in tRNA + (sulfur carrier)-SH + AH2 + 2 S-adenosyl-L-methionine = 2-methylsulfanyl-N(6)-dimethylallyladenosine(37) in tRNA + (sulfur carrier)-H + 5'-deoxyadenosine + L-methionine + A + S-adenosyl-L-homocysteine + 2 H(+). In terms of biological role, catalyzes the methylthiolation of N6-(dimethylallyl)adenosine (i(6)A), leading to the formation of 2-methylthio-N6-(dimethylallyl)adenosine (ms(2)i(6)A) at position 37 in tRNAs that read codons beginning with uridine. This is tRNA-2-methylthio-N(6)-dimethylallyladenosine synthase from Acaryochloris marina (strain MBIC 11017).